A 294-amino-acid chain; its full sequence is Shell matrix protein (294 aa).

Component of the organic matrix of calcified shell layers like nacre and prisms.

It localises to the secreted. The protein is Shell matrix protein of Mytilus californianus (California mussel).